A 576-amino-acid chain; its full sequence is Nuclear/nucleolar GTPase 2 (576 aa).

2 disordered regions span residues 1–61 (MVKK…SNEY) and 166–186 (QDAF…EEED). Over residues 16–34 (HSLDANRADGKKKTTETRS) the composition is skewed to basic and acidic residues. Over residues 42–52 (KMYKTRPKRNA) the composition is skewed to basic residues. A CP-type G domain is found at 206 to 367 (WGELYKVIDS…LIDCPGVVYQ (162 aa)). A DARXP motif motif is present at residues 224 to 228 (DARDP). The interval 254–257 (NKCD) is G4. Position 254–257 (254–257 (NKCD)) interacts with GTP. Residues 283 to 285 (SVN) form a G5 region. Residues 316–323 (GYPNVGKS) form a G1 region. Residue 319-324 (NVGKSS) coordinates GTP. The interval 342–346 (GETKV) is G2. The G3 stretch occupies residues 360–363 (DCPG). A GTP-binding site is contributed by Gly-363. The disordered stretch occupies residues 502–576 (TQQQKDVPVQ…DEEDESDSAE (75 aa)). The segment covering 509 to 530 (PVQRDFYDEKDLKDDKKAKEST) has biased composition (basic and acidic residues). Residues 531–576 (ETDAENGTDAEEDEDAVSEDGVESDSDADEDAVSENDEEDESDSAE) show a composition bias toward acidic residues.

This sequence belongs to the TRAFAC class YlqF/YawG GTPase family. RsgA subfamily. Interacts with the 60S ribosomal proteins RPL10AA, RPL10AB and RPL10AC. Ubiquitous, with higher levels in meristematic regions.

It is found in the nucleus. Its subcellular location is the nucleolus. The GTPase activity is stimulated in the presence of the 60S ribosomal subunit. In terms of biological role, GTPase involved in pre-60S ribosomal subunit maturation. The polypeptide is Nuclear/nucleolar GTPase 2 (Arabidopsis thaliana (Mouse-ear cress)).